Consider the following 506-residue polypeptide: Histidine ammonia-lyase (506 aa).

Positions Ala-143–Gly-145 form a cross-link, 5-imidazolinone (Ala-Gly). Ser-144 bears the 2,3-didehydroalanine (Ser) mark.

The protein belongs to the PAL/histidase family. Post-translationally, contains an active site 4-methylidene-imidazol-5-one (MIO), which is formed autocatalytically by cyclization and dehydration of residues Ala-Ser-Gly.

It is found in the cytoplasm. The catalysed reaction is L-histidine = trans-urocanate + NH4(+). The protein operates within amino-acid degradation; L-histidine degradation into L-glutamate; N-formimidoyl-L-glutamate from L-histidine: step 1/3. In Salmonella paratyphi A (strain ATCC 9150 / SARB42), this protein is Histidine ammonia-lyase.